A 206-amino-acid chain; its full sequence is Crossover junction endodeoxyribonuclease RuvC (206 aa).

Residues Asp-7, Glu-67, and Asp-138 contribute to the active site. Residues Asp-7, Glu-67, and Asp-138 each contribute to the Mg(2+) site.

Belongs to the RuvC family. As to quaternary structure, homodimer which binds Holliday junction (HJ) DNA. The HJ becomes 2-fold symmetrical on binding to RuvC with unstacked arms; it has a different conformation from HJ DNA in complex with RuvA. In the full resolvosome a probable DNA-RuvA(4)-RuvB(12)-RuvC(2) complex forms which resolves the HJ. The cofactor is Mg(2+).

Its subcellular location is the cytoplasm. It carries out the reaction Endonucleolytic cleavage at a junction such as a reciprocal single-stranded crossover between two homologous DNA duplexes (Holliday junction).. In terms of biological role, the RuvA-RuvB-RuvC complex processes Holliday junction (HJ) DNA during genetic recombination and DNA repair. Endonuclease that resolves HJ intermediates. Cleaves cruciform DNA by making single-stranded nicks across the HJ at symmetrical positions within the homologous arms, yielding a 5'-phosphate and a 3'-hydroxyl group; requires a central core of homology in the junction. The consensus cleavage sequence is 5'-(A/T)TT(C/G)-3'. Cleavage occurs on the 3'-side of the TT dinucleotide at the point of strand exchange. HJ branch migration catalyzed by RuvA-RuvB allows RuvC to scan DNA until it finds its consensus sequence, where it cleaves and resolves the cruciform DNA. The protein is Crossover junction endodeoxyribonuclease RuvC of Anaeromyxobacter sp. (strain Fw109-5).